We begin with the raw amino-acid sequence, 352 residues long: Protein-glutamate methylesterase/protein-glutamine glutaminase (352 aa).

In terms of domain architecture, Response regulatory spans 5 to 123 (RILIVDDSVI…SKEKAIEYIR (119 aa)). D56 carries the post-translational modification 4-aspartylphosphate. In terms of domain architecture, CheB-type methylesterase spans 166–352 (EIVAIGVSTG…LAEEIIRRIG (187 aa)). Active-site residues include S173, H200, and D296.

It belongs to the CheB family. Phosphorylated by CheA. Phosphorylation of the N-terminal regulatory domain activates the methylesterase activity.

Its subcellular location is the cytoplasm. It carries out the reaction [protein]-L-glutamate 5-O-methyl ester + H2O = L-glutamyl-[protein] + methanol + H(+). The catalysed reaction is L-glutaminyl-[protein] + H2O = L-glutamyl-[protein] + NH4(+). Its function is as follows. Involved in chemotaxis. Part of a chemotaxis signal transduction system that modulates chemotaxis in response to various stimuli. Catalyzes the demethylation of specific methylglutamate residues introduced into the chemoreceptors (methyl-accepting chemotaxis proteins or MCP) by CheR. Also mediates the irreversible deamidation of specific glutamine residues to glutamic acid. In Trichodesmium erythraeum (strain IMS101), this protein is Protein-glutamate methylesterase/protein-glutamine glutaminase.